We begin with the raw amino-acid sequence, 447 residues long: GTPase Der (447 aa).

EngA-type G domains follow at residues 4–165 and 180–357; these read KIIT…SVEE and LQIV…KIWN. Residues 10–17, 57–61, 119–122, 186–193, 233–237, and 298–301 each bind GTP; these read GRPNVGKS, DTPGL, NKCE, GRPNAGKS, DTAGL, and NKWD. The KH-like domain maps to 358-443; that stretch reads KKITTNKLNK…PIRFTYVKNK (86 aa).

Belongs to the TRAFAC class TrmE-Era-EngA-EngB-Septin-like GTPase superfamily. EngA (Der) GTPase family. Associates with the 50S ribosomal subunit.

Its function is as follows. GTPase that plays an essential role in the late steps of ribosome biogenesis. In Rickettsia prowazekii (strain Madrid E), this protein is GTPase Der.